The sequence spans 182 residues: MENLTQKEKNYLLSTIRDVKDFPKPGIIFKDITTLLNNKDAFNFLMSHLAKVYKDKNIDFIAGIESRGFIFGAALAAKINIPFVPIRKPKKLPYITISQKYSLEYGFDEIEIHIDAFSGVKNAKVLLIDDLIATGGTAKAAVELINQTNAKCVEACFLINLKDFGGAEKVAEMTKIYSVLEV.

The protein belongs to the purine/pyrimidine phosphoribosyltransferase family. In terms of assembly, homodimer.

It localises to the cytoplasm. It catalyses the reaction AMP + diphosphate = 5-phospho-alpha-D-ribose 1-diphosphate + adenine. It functions in the pathway purine metabolism; AMP biosynthesis via salvage pathway; AMP from adenine: step 1/1. Catalyzes a salvage reaction resulting in the formation of AMP, that is energically less costly than de novo synthesis. This chain is Adenine phosphoribosyltransferase, found in Campylobacter hominis (strain ATCC BAA-381 / DSM 21671 / CCUG 45161 / LMG 19568 / NCTC 13146 / CH001A).